The primary structure comprises 56 residues: Protein p56 (56 aa).

This sequence belongs to the phi29likevirus protein p56 family. As to quaternary structure, homodimer. Interacts with host UDG; this interaction inhibits the uracil-DNA glycosylase.

Its function is as follows. Inhibits the host uracil-DNA glycosylase (UDG), an enzyme which removes uracil residues from DNA by the base excision repair. Interacts with host uracil-DNA glycosylase and prevents the latter from binding to DNA. Since the viral DNA polymerase efficiently incorporates dUMP into DNA, the virus needs to prevent the deleterious effect caused by host UDG when it eliminates uracil residues present in the viral genome. The sequence is that of Protein p56 from Bacillus phage phi29 (Bacteriophage phi-29).